A 68-amino-acid polypeptide reads, in one-letter code: MLYPSIDELTEKAESKYILVTVASKRARQLRENSEVQVVRPKSKKFVGLALEEFISDELVHEFLDGRK.

This sequence belongs to the RNA polymerase subunit omega family. In terms of assembly, the RNAP catalytic core consists of 2 alpha, 1 beta, 1 beta' and 1 omega subunit. When a sigma factor is associated with the core the holoenzyme is formed, which can initiate transcription.

The catalysed reaction is RNA(n) + a ribonucleoside 5'-triphosphate = RNA(n+1) + diphosphate. In terms of biological role, promotes RNA polymerase assembly. Latches the N- and C-terminal regions of the beta' subunit thereby facilitating its interaction with the beta and alpha subunits. The protein is DNA-directed RNA polymerase subunit omega of Brevibacillus brevis (strain 47 / JCM 6285 / NBRC 100599).